The chain runs to 66 residues: Alpha-conotoxin RegIIA (66 aa).

An N-terminal signal peptide occupies residues Met1–Ser21. The propeptide occupies Ser22 to Arg49. Intrachain disulfides connect Cys51-Cys57 and Cys52-Cys65. Positions Ser53–Pro55 are ser-Xaa-Pro motif, crucial for potent interaction with nAChR. Cys65 carries the cysteine amide modification.

The protein belongs to the conotoxin A superfamily. Expressed by the venom duct.

It is found in the secreted. Its function is as follows. Alpha-conotoxins act on postsynaptic membranes, they bind to the nicotinic acetylcholine receptors (nAChR) and thus inhibit them. This toxin potently inhibits alpha-3 containing subunit nAChR. It inhibits alpha-3-beta-2/CHRNA3-CHRNB2 (IC(50)=10.7-33 nM (rat)/132.4-704.1 nM (human)) and alpha-3-beta-4/CHRNA3-CHRNB4 (IC(50)=47.3-97 nM (rat)/52.1 nM (human)). It also inhibits alpha-7/CHRNA7 nAChR with IC(50)=103-210 nM (human)/41-61.2 nM (rat) nAChRs. It is more potent on alpha-3-beta-2 receptors in human than in rat, due to a variation (Pro vs Gln) in alpha-3 subunit in these orthologs. Conversely, does not show species-specific differences in sensitivity at the alpha-3-beta-4 receptor. The chain is Alpha-conotoxin RegIIA from Conus regius (Crown cone).